Here is a 270-residue protein sequence, read N- to C-terminus: Acetylglutamate kinase (270 aa).

Residues 53-54 (GG), arginine 75, and asparagine 167 contribute to the substrate site.

Belongs to the acetylglutamate kinase family. ArgB subfamily.

It is found in the cytoplasm. The enzyme catalyses N-acetyl-L-glutamate + ATP = N-acetyl-L-glutamyl 5-phosphate + ADP. The protein operates within amino-acid biosynthesis; L-arginine biosynthesis; N(2)-acetyl-L-ornithine from L-glutamate: step 2/4. In terms of biological role, catalyzes the ATP-dependent phosphorylation of N-acetyl-L-glutamate. The sequence is that of Acetylglutamate kinase from Shewanella halifaxensis (strain HAW-EB4).